A 151-amino-acid chain; its full sequence is MKIILRKDVAALGDAGDVVAVKNGYANNYLIPQGMAIRATEGTLKALETEKKQQAKKIEQQRKNARDLAQKIEQMTLKVYAKAGESGKLFGTVTSADIAEALSAQGVEIDRRKITLEAPVKLLGKYEADAKLFMDVTVKVNFEVEAESSAS.

The protein belongs to the bacterial ribosomal protein bL9 family.

Its function is as follows. Binds to the 23S rRNA. This Chlorobium limicola (strain DSM 245 / NBRC 103803 / 6330) protein is Large ribosomal subunit protein bL9.